The primary structure comprises 503 residues: Maturase K (503 aa).

Belongs to the intron maturase 2 family. MatK subfamily.

The protein localises to the plastid. The protein resides in the chloroplast. Usually encoded in the trnK tRNA gene intron. Probably assists in splicing its own and other chloroplast group II introns. The sequence is that of Maturase K from Eucalyptus globulus subsp. globulus (Tasmanian blue gum).